The primary structure comprises 1269 residues: Protein strawberry notch homolog 1 (1269 aa).

Residues 21 to 47 are disordered; it reads NDLFDVDGGDAGLATPTPPSVQQQQPP. The residue at position 113 (Lys-113) is an N6-acetyllysine. Ser-126 and Ser-178 each carry phosphoserine. Lys-377 is subject to N6-acetyllysine. The segment at 652–725 is disordered; it reads PSNNSSPRDS…SLITSQDAVE (74 aa). Phosphoserine occurs at positions 656, 657, and 661. A compositionally biased stretch (acidic residues) spans 679–693; sequence SGSESDVSDNEESDY. 2 positions are modified to phosphoserine: Ser-700 and Ser-701. A coiled-coil region spans residues 719-746; sequence TSQDAVERAQQMKKDLLDKLEKLAEDLP. N6-acetyllysine is present on Lys-1098. Phosphoserine is present on Ser-1262.

This sequence belongs to the SBNO family.

It is found in the nucleus. Functionally, plays a crucial role in the regulation of neural stem cells (NSCs) proliferation. Enhances the phosphorylation of GSK3B through the PI3K-Akt signaling pathway, thereby upregulating the Wnt/beta-catenin signaling pathway and promoting the proliferation of NSCs. Improves ischemic stroke recovery while inhibiting neuroinflammation through small extracellular vesicles (sEVs)-mediated mechanism. Enhances the secretion of sEVs from NSCs, which in turn inhibit both the MAPK and NF-kappaB pathways in microglia. This inhibition suppresses the pro-inflammatory M1 polarization of microglia, promoting a shift towards the M2 anti-inflammatory phenotype, which is beneficial for reducing neuroinflammation. The polypeptide is Protein strawberry notch homolog 1 (Sbno1) (Rattus norvegicus (Rat)).